A 1392-amino-acid polypeptide reads, in one-letter code: MSALLRPARWLLGAAAVPRLPLSLRLPAGGPGRLPSVVRVAAAGGRPAAGELLSQARLYAIVAEKKDLPEEPAPVRRSGSQFDWALMRLDNSVRRTGRITKGLLQKVFESTCRSGSPGSNQALLLLRSCGSLLPELSLAERTEFAHKIWDKLQQLGTVYDVSHYNALLKVYLQNEYRFSPTDFLAKMEGANIQPNRVTYQRLIAAYCSVGDIEGASKILGFMKTRDLPITEAVFSALVTGHARAGDMESAENILTVMKQAGIEPGPDTYLALLNAHAEKGDIDHVKQILEKVEKSDHYFMDRDFLQIIVSFSKAGYPQYVSEILEKITYERRSIPDAMNLILLLVTEKLEDTAFQVLLALPLARDETSSSFGSFFLRHCVTMDTPAEKLIDYCKRLRDAKVHSSSLQFTLHCALQANKTALAKAVMEALRDEGFPIRTHYFWPLLVGHQKTKNVQGIIDILKIMKEMGVDPDQETYINYVFPCFGSVQSARAALQENKCLPKSTTFAQAEVRNEAINGNLQNILSFLESNALPFSFNSLRGSLILGFRRSMNIDLWSKITELLYKDDRYCQKPPGPTEAVGYFLYNLIDSMSDSEVQAKEERLRQYFHQLREMNVKVSENIYKGICNLLDNYHVPELIKDVKVLVDREKIDSRKTSQFTSSDLESTLEKLKAEGHPVGDPLKQLILLLCSEENMQKALEVKAKYESDMVIGGYAALINLCCRHDNAEDALNLKQEFDRLDPSAVLDTAKYVALVKVLGKHGRVQDAINILKEMKEKDVVIKDAAVLSFFHILNGAALRGEIETVKQLHEAIVTLGLAKPSSNISFPLVTVHLEKDDLPAALEASIACHEKYKVLPRIHDVLCKLIEKGETDLIQKAMDFVSQEQGEMSMLYDLFFAFLQTGNYKEAKKIIETPGIRARPTRLQWFCDRCIANNQVETLEKLVELTEKLFECDRDQMYYNLLKLYKISGDWQRADAVWNKMQEENLIPRERTLRLLAGILKTSNQEVPFDVPELWFGDDRSSLSSSSPSAGDTVTEKMLLSDCRLKKSKDAYNIFLKAEKQDVVFSSEAYSTLVGLLLSKDDFTRAMHVKDFAETHIKGFTLNGAASSLLIIAQVRRDYLKVALETLKAALDLEQVPSELAVTRLIQALALQGDVKSIETIQKMVKGLDAIELSRMVFINNIALAQMKNNEIDAAIENIEHMLASENQTVEHQYFGLSYLFRKVIEEQMEPALEKLSIMSERLANQFALYKPVTDLFLQLVDSGKVDEARALLERCGAIAEQTSILSVFCLRTSQKPKKAPVLKTLLELIPELRENDRVYSCSMKSYVADKDVASAKALYEHLTAKNMKLDDLFLKRYASLLKDVGEPVPFTEPPESFGFYIKQLKEARENPS.

The transit peptide at 1-77 (MSALLRPARW…LPEEPAPVRR (77 aa)) directs the protein to the mitochondrion. PPR repeat units lie at residues 125–159 (LLRSCGSLLPELSLAERTEFAHKIWDKLQQLGTVY), 160–194 (DVSHYNALLKVYLQNEYRFSPTDFLAKMEGANIQP), 195–229 (NRVTYQRLIAAYCSVGDIEGASKILGFMKTRDLPI), 230–264 (TEAVFSALVTGHARAGDMESAENILTVMKQAGIEP), 265–299 (GPDTYLALLNAHAEKGDIDHVKQILEKVEKSDHYF), 300–334 (MDRDFLQIIVSFSKAGYPQYVSEILEKITYERRSI), 402–436 (HSSSLQFTLHCALQANKTALAKAVMEALRDEGFPI), 437–471 (RTHYFWPLLVGHQKTKNVQGIIDILKIMKEMGVDP), 677–708 (VGDPLKQLILLLCSEENMQKALEVKAKYESDM), 709–745 (VIGGYAALINLCCRHDNAEDALNLKQEFDRLDPSAVL), 746–783 (DTAKYVALVKVLGKHGRVQDAINILKEMKEKDVVIKDA), 784–820 (AVLSFFHILNGAALRGEIETVKQLHEAIVTLGLAKPS), 821–856 (SNISFPLVTVHLEKDDLPAALEASIACHEKYKVLPR), and 953–987 (RDQMYYNLLKLYKISGDWQRADAVWNKMQEENLIP). 2 positions are modified to N6-acetyllysine: Lys151 and Lys186. The residue at position 291 (Lys291) is an N6-acetyllysine. Lys462 carries the N6-acetyllysine modification. Lys749 bears the N6-acetyllysine mark. Residues Ser1025, Ser1026, and Ser1028 each carry the phosphoserine modification. PPR repeat units lie at residues 1030–1064 (GDTVTEKMLLSDCRLKKSKDAYNIFLKAEKQDVVF), 1065–1101 (SSEAYSTLVGLLLSKDDFTRAMHVKDFAETHIKGFTL), 1102–1136 (NGAASSLLIIAQVRRDYLKVALETLKAALDLEQVP), 1137–1173 (SELAVTRLIQALALQGDVKSIETIQKMVKGLDAIELS), 1174–1208 (RMVFINNIALAQMKNNEIDAAIENIEHMLASENQT), and 1315–1349 (NDRVYSCSMKSYVADKDVASAKALYEHLTAKNMKL). At Ser1137 the chain carries Phosphoserine.

As to quaternary structure, component of mRNP complexes associated with HNRPA1. Component of the complex, at least composed of LRPPRC, BECN1 and BCL2; the interactions prevent BECN1 from forming an autophagy-inducing complex with PIK3C3. Interacts with CECR2, HEBP2, MAP1S, UXT, PPARGC1A and FOXO1. Interacts (via N-terminus) with EIF4E; the interaction promotes association of EIF4E with 4ESE-containing mRNAs. Interacts with exportin XPO1/CRM1; interacts both alone and in complex with EIF4E and 4ESE-containing mRNAs to form an EIF4E-dependent mRNA export complex. Interacts with importin IPO8; the interaction occurs when LRPPRC is in its RNA-free form and returns LRPPRC to the nucleus for further export rounds. Interacts with BECN1. In terms of tissue distribution, widely expressed. Expressed in liver, brain and a subset of small diameter sensory neurons in the dorsal root ganglion (at protein level).

The protein resides in the mitochondrion. The protein localises to the nucleus. It localises to the nucleoplasm. Its subcellular location is the nucleus inner membrane. It is found in the nucleus outer membrane. May play a role in RNA metabolism in both nuclei and mitochondria. In the nucleus binds to HNRPA1-associated poly(A) mRNAs and is part of nmRNP complexes at late stages of mRNA maturation which are possibly associated with nuclear mRNA export. Positively modulates nuclear export of mRNAs containing the EIF4E sensitivity element (4ESE) by binding simultaneously to both EIF4E and the 4ESE and acting as a platform for assembly for the RNA export complex. Also binds to exportin XPO1/CRM1 to engage the nuclear pore and traffic the bound mRNAs to the cytoplasm. May bind mature mRNA in the nucleus outer membrane. In mitochondria binds to poly(A) mRNA. Plays a role in translation or stability of mitochondrially encoded cytochrome c oxidase (COX) subunits. May be involved in transcription regulation. Cooperates with PPARGC1A to regulate certain mitochondrially encoded genes and gluconeogenic genes and may regulate docking of PPARGC1A to transcription factors. Seems to be involved in the transcription regulation of the multidrug-related genes MDR1 and MVP. Part of a nuclear factor that binds to the invMED1 element of MDR1 and MVP gene promoters. Binds single-stranded DNA. Required for maintaining mitochondrial potential. Suppresses the initiation of basal levels of autophagy and mitophagy by sustaining BCL2 levels. This Rattus norvegicus (Rat) protein is Leucine-rich PPR motif-containing protein, mitochondrial (Lrpprc).